The following is a 345-amino-acid chain: Phosphoribosylformylglycinamidine cyclo-ligase (345 aa).

This sequence belongs to the AIR synthase family.

It is found in the cytoplasm. The enzyme catalyses 2-formamido-N(1)-(5-O-phospho-beta-D-ribosyl)acetamidine + ATP = 5-amino-1-(5-phospho-beta-D-ribosyl)imidazole + ADP + phosphate + H(+). The protein operates within purine metabolism; IMP biosynthesis via de novo pathway; 5-amino-1-(5-phospho-D-ribosyl)imidazole from N(2)-formyl-N(1)-(5-phospho-D-ribosyl)glycinamide: step 2/2. The protein is Phosphoribosylformylglycinamidine cyclo-ligase of Tolumonas auensis (strain DSM 9187 / NBRC 110442 / TA 4).